The primary structure comprises 237 residues: Phosphoribosylaminoimidazole-succinocarboxamide synthase (237 aa).

This sequence belongs to the SAICAR synthetase family.

The enzyme catalyses 5-amino-1-(5-phospho-D-ribosyl)imidazole-4-carboxylate + L-aspartate + ATP = (2S)-2-[5-amino-1-(5-phospho-beta-D-ribosyl)imidazole-4-carboxamido]succinate + ADP + phosphate + 2 H(+). It functions in the pathway purine metabolism; IMP biosynthesis via de novo pathway; 5-amino-1-(5-phospho-D-ribosyl)imidazole-4-carboxamide from 5-amino-1-(5-phospho-D-ribosyl)imidazole-4-carboxylate: step 1/2. The polypeptide is Phosphoribosylaminoimidazole-succinocarboxamide synthase (Photorhabdus laumondii subsp. laumondii (strain DSM 15139 / CIP 105565 / TT01) (Photorhabdus luminescens subsp. laumondii)).